A 503-amino-acid polypeptide reads, in one-letter code: UDP-N-acetylmuramate--L-alanine ligase (503 aa).

Residue glycine 120 to serine 126 coordinates ATP.

Belongs to the MurCDEF family.

The protein localises to the cytoplasm. It catalyses the reaction UDP-N-acetyl-alpha-D-muramate + L-alanine + ATP = UDP-N-acetyl-alpha-D-muramoyl-L-alanine + ADP + phosphate + H(+). It participates in cell wall biogenesis; peptidoglycan biosynthesis. Functionally, cell wall formation. This Rhodococcus jostii (strain RHA1) protein is UDP-N-acetylmuramate--L-alanine ligase.